Reading from the N-terminus, the 637-residue chain is Transcription factor GLABRA 3 (637 aa).

A bHLH domain is found at D437–L486. Residues R497–R521 are disordered. The binding with MYB0/GL1 and MYB23 stretch occupies residues N541–C637.

As to quaternary structure, efficient DNA binding requires dimerization with another bHLH protein. Homodimer and heterodimer with BHLH2. Interacts directly with TTG1 and MYB0/GL1 to form a complex. Its interaction with TRY prevents MYB0/GL1 binding. Interacts with MYB75/PAP1, MYB90/PAP2, TT2, CPC, MYB23 and MYB66/WER. Interacts with MYB82. In terms of tissue distribution, mostly expressed in roots and flowers. Also present in stems and leaves, and, to a lower extent, in hypocotyls. Expressed in epidermal root hair cells (trichoblasts) and moves to root hairless cells (atrichoblasts) by a cell-to-cell movement through plasmodesmata (at protein level).

It localises to the nucleus. In terms of biological role, transcription activator, when associated with MYB75/PAP1, MYB90/PAP2 or TT2. Involved in epidermal cell fate specification. Negatively regulates stomata formation, but, in association with TTG1 and MYB0/GL1, promotes trichome formation, branching and endoreplication. Also regulates trichome cell wall maturation. Together with MYB66/WER, promotes the formation of non-hair cells in root epidermis cells in the N position. Whereas together with CPC, promotes the formation of hair cells in root epidermis cells in the H position by inhibiting non-hair cell formation. Also seems to play a role in the activation of anthocyanin biosynthesis, probably together with MYB75/PAP1. Activates the transcription of GL2. The chain is Transcription factor GLABRA 3 (GL3) from Arabidopsis thaliana (Mouse-ear cress).